The primary structure comprises 356 residues: MAESPTEEAATATAGAGAAGPGASGVAGVVGVSGSGGGFGPPFLPDVWAAAAAAGGAGGPGSGLAPLPGLPPSAAAHGAALLSHWDPTLSSDWDGERTAPQCLLRIKRDIMSIYKEPPPGMFVVPDTVDMTKIHALITGPFDTPYEGGFFLFVFRCPPDYPIHPPRVKLMTTGNNTVRFNPNFYRNGKVCLSILGTWTGPAWSPAQSISSVLISIQSLMTENPYHNEPGFEQERHPGDSKNYNECIRHETIRVAVCDMMEGKCPCPEPLRGVMEKSFLEYYDFYEVACKDRLHLQGQTMQDPFGEKRGHFDYQSLLMRLGLIRQKVLERLHNENAEMDSDSSSSGTETDLHGSLRV.

A compositionally biased stretch (low complexity) spans 1 to 16; it reads MAESPTEEAATATAGA. The segment at 1–22 is disordered; sequence MAESPTEEAATATAGAGAAGPG. Positions 101 to 255 constitute a UBC core domain; it reads QCLLRIKRDI…IRHETIRVAV (155 aa). The active-site Glycyl thioester intermediate is the Cys-190. Residues 334–356 are disordered; that stretch reads NAEMDSDSSSSGTETDLHGSLRV. Ser-339 carries the phosphoserine modification.

It belongs to the ubiquitin-conjugating enzyme family.

Its subcellular location is the cytoplasm. The protein resides in the nucleus. It catalyses the reaction S-ubiquitinyl-[E1 ubiquitin-activating enzyme]-L-cysteine + [E2 ubiquitin-conjugating enzyme]-L-cysteine = [E1 ubiquitin-activating enzyme]-L-cysteine + S-ubiquitinyl-[E2 ubiquitin-conjugating enzyme]-L-cysteine.. It functions in the pathway protein modification; protein ubiquitination. Catalyzes the covalent attachment of ubiquitin to other proteins. Specific substrate for UBA6, not charged with ubiquitin by UBE1. May be involved in apoptosis regulation. The polypeptide is Ubiquitin-conjugating enzyme E2 Z (Ube2z) (Rattus norvegicus (Rat)).